The sequence spans 1317 residues: MAQTNGDMEHSKGWSGHFADFSTAQFRRPRSVCSSDETNGSFFLLQRLPKPNQSNSPPMVNRLKDSRKRRAAVVCRIRDTRDGWFSALVLSSLTSSVIGLFQISVKLPHEPYKIQVMVSSQEQVQDVRQSIVELPGTFQYTCFHLEFNGKRINDFVELSEVEGLKADSEIVLVEDPYTEKEARMHMVRIRDLVGAAGDRSDNLHGLNAGLSLHDAVTAEAAADDVKEHSLSKYDITASPSLETILPRVEAPLPKTVKSISLSAWNPPPYHLRQKGHLLYLQVTTNEGEQFQITSHVSGFYVNKCSNHKFDPLPRTTPKKVSAHSLLTLISKLSPSFNSAFEALQESNNKKDLLTTFPFQNAIPNSPWLVTPPSSNPNSHQADITRSQESYLVSGVDNAETLRDWNEEFQTTRELPRETVQDRVFRERLTSKLFADYNEAAARGAVLVARGEVAPLNPTEDRDAQIFVYNNIFYSFGADGVGTFVSEGGDEAARVAVGKDVLGIKAVNQLDINGLFTPGTVVVDYLGKRIVGQSIVPGIFKQREPGEHQIDYGGVEGKDVVATHPDFVSVFEKMSKALRIKKHPVWDKEGKRHELEGSVETKGLLGTDGRKYVLDLYRVTPLDVTWQEEPGSEDYPHRMSVLRLELVEAYWRSKMSQYVKAEVERRRAAKAQEEAANKEQSSEVTESKEQESEEKAEEALDQERVDISGFQLALNPDVCSGQVPQTEEEKKQWAEDEKEVRDACEFLRSKVIPELIQDLHDGDVGFPMDGQSLSQLLHKRGINIRYLGKLAQLSKEKGSRLEALTTLLVQEMIARAFKHIANRYLRNVPAPFVASCVAHLLNCLLGADVNPNPSAEIDASLREIYPEGDFSFEKVTPETLRAEVEKQVTVRYRYTLEAEWFASLRHLQVLRDIAIKLGLQLGARDYAFTKAQLPAKVPVANGVNGASHDEGKKKKKKGGDSKSPSRAVVEEKPVISIVPDDIVNVVPLVKDASPRSSLAEEALEAGRISLMQNQKQLGQELILESLSLHEQIYGILHPEVAKLYHQLSMLYYQTDEKEAAVELARKAVIVTERTLGVDSADTILAYLNLSLFEHASGNTKAALVYIKHAMDLWKIIYGSNHPDSITTMNNAAVMLQHLKQYSDSRKWFEASLAVCESLFGKQSINTATILFQLAQALALDQDSKGAVGKMRDAYNIFLNQLGPNDRNTKEAETWLEQLTQNAVSIAKHAKDIQARRLRRINMNPRVTTLGTKVQPQVGQTAPEASGAKGAANASMDSRSIDELLKFIEGGDATSSRSKQKKRAAASNPKLRGSKKSSA.

The Clu domain maps to 382–626 (DITRSQESYL…RVTPLDVTWQ (245 aa)). Residues 669 to 689 (KAQEEAANKEQSSEVTESKEQ) are compositionally biased toward basic and acidic residues. Disordered stretches follow at residues 669–700 (KAQE…EALD) and 939–966 (ANGV…PSRA). TPR repeat units lie at residues 1040-1073 (AKLY…TERT), 1082-1115 (ILAY…WKII), and 1124-1157 (ITTM…CESL). Disordered regions lie at residues 1252-1273 (VQPQ…ANAS) and 1288-1317 (GGDA…KSSA).

This sequence belongs to the CLU family. In terms of assembly, may associate with the eukaryotic translation initiation factor 3 (eIF-3) complex.

Its subcellular location is the cytoplasm. Its function is as follows. mRNA-binding protein involved in proper cytoplasmic distribution of mitochondria. This is Clustered mitochondria protein homolog from Neosartorya fischeri (strain ATCC 1020 / DSM 3700 / CBS 544.65 / FGSC A1164 / JCM 1740 / NRRL 181 / WB 181) (Aspergillus fischerianus).